Reading from the N-terminus, the 70-residue chain is Aurein-3.1 (70 aa).

The N-terminal stretch at 1–22 is a signal peptide; the sequence is MAFLKKSLFLVLFLGLVSLSIC. Residues 23-49 constitute a propeptide that is removed on maturation; it reads EKEKRQNEEDEDENEAANHEEGSEEKR. Residues 27 to 48 form a disordered region; it reads RQNEEDEDENEAANHEEGSEEK. Basic and acidic residues predominate over residues 38 to 48; that stretch reads AANHEEGSEEK. Isoleucine 66 is modified (isoleucine amide).

In terms of tissue distribution, expressed by the skin dorsal glands.

The protein resides in the secreted. It localises to the target cell membrane. Its function is as follows. Amphipathic alpha-helical antimicrobial peptide with weak to potent activity against Gram-positive bacteria, and no activity against Gram-negative bacteria. Probably acts by disturbing membrane functions with its amphipathic structure. Shows anticancer activity. The protein is Aurein-3.1 of Ranoidea aurea (Green and golden bell frog).